A 325-amino-acid polypeptide reads, in one-letter code: Gibberellin 20-oxidase-like protein (325 aa).

Positions 152–266 (CHGYFRINNY…RFSLAFFWCF (115 aa)) constitute a Fe2OG dioxygenase domain. Fe cation-binding residues include H186, D188, and H244. Position 257 (R257) interacts with 2-oxoglutarate.

The protein belongs to the iron/ascorbate-dependent oxidoreductase family. GA20OX subfamily. It depends on Fe(2+) as a cofactor. Highly expressed in elongation zone of lateral roots.

Its function is as follows. Negative regulator of root hair growth. This is Gibberellin 20-oxidase-like protein from Arabidopsis thaliana (Mouse-ear cress).